The primary structure comprises 425 residues: Serine--tRNA ligase (425 aa).

An L-serine-binding site is contributed by 233–235 (TAE). 264–266 (RAE) contributes to the ATP binding site. E287 lines the L-serine pocket. Residue 351–354 (EISS) participates in ATP binding. Position 387 (S387) interacts with L-serine.

This sequence belongs to the class-II aminoacyl-tRNA synthetase family. Type-1 seryl-tRNA synthetase subfamily. In terms of assembly, homodimer. The tRNA molecule binds across the dimer.

Its subcellular location is the cytoplasm. It catalyses the reaction tRNA(Ser) + L-serine + ATP = L-seryl-tRNA(Ser) + AMP + diphosphate + H(+). The enzyme catalyses tRNA(Sec) + L-serine + ATP = L-seryl-tRNA(Sec) + AMP + diphosphate + H(+). It participates in aminoacyl-tRNA biosynthesis; selenocysteinyl-tRNA(Sec) biosynthesis; L-seryl-tRNA(Sec) from L-serine and tRNA(Sec): step 1/1. In terms of biological role, catalyzes the attachment of serine to tRNA(Ser). Is also able to aminoacylate tRNA(Sec) with serine, to form the misacylated tRNA L-seryl-tRNA(Sec), which will be further converted into selenocysteinyl-tRNA(Sec). This is Serine--tRNA ligase from Clostridium botulinum (strain Alaska E43 / Type E3).